Reading from the N-terminus, the 291-residue chain is MVSVPGPVSLIEPLSGNTILVIKINALHVVKRSKYQEIIIADTEDFGRALILDEYIQSSYYDEAYYHESLVHPAMVTHISPRDVLILGGGEGATLREALKHSTVKRAVMVDIDEDVVELSKKYLPQMHQGVFEDPRAQVVIEDGFVYVEKALKNGDKFDVVIMDLTDPYSSEIAKQLYSPEFFKKLVGLLREDGIIVTQAGNSFFFPEAYDMVLHGVKSSFPVVAEYNVWIPSFGYAVNYIIGSLKYDPTSLTAEEVEKRLKERGVKTLFYSGKTHVGLMNLPIYRKIRHV.

Residues 5 to 245 (PGPVSLIEPL…YAVNYIIGSL (241 aa)) form the PABS domain. Residue Gln-36 participates in S-methyl-5'-thioadenosine binding. Positions 67 and 91 each coordinate spermidine. Residues Asp-111 and 143-144 (DG) contribute to the S-methyl-5'-thioadenosine site. The Proton acceptor role is filled by Asp-164.

The protein belongs to the spermidine/spermine synthase family. In terms of assembly, homodimer or homotetramer.

It localises to the cytoplasm. The enzyme catalyses S-adenosyl 3-(methylsulfanyl)propylamine + putrescine = S-methyl-5'-thioadenosine + spermidine + H(+). Its pathway is amine and polyamine biosynthesis; spermidine biosynthesis; spermidine from putrescine: step 1/1. Its function is as follows. Catalyzes the irreversible transfer of a propylamine group from the amino donor S-adenosylmethioninamine (decarboxy-AdoMet) to putrescine (1,4-diaminobutane) to yield spermidine. The protein is Polyamine aminopropyltransferase of Pyrobaculum islandicum (strain DSM 4184 / JCM 9189 / GEO3).